The primary structure comprises 1382 residues: ATP-dependent RNA helicase TDRD9 (1382 aa).

The segment at 36-62 (AAREEVQRQDVAPGAGPAAQAPALAQA) is disordered. Over residues 47-62 (APGAGPAAQAPALAQA) the composition is skewed to low complexity. The Helicase ATP-binding domain maps to 142-308 (VSLIESNSVV…FAVPVQNKMN (167 aa)). 155–162 (GATGSGKS) lines the ATP pocket. A DEAH box motif is present at residues 254-257 (DEVH). The 168-residue stretch at 377–544 (SGAQFVLERS…ILKVKLLDMG (168 aa)) folds into the Helicase C-terminal domain. The region spanning 944 to 1004 (HPHPDLVCLA…MEIPCQFLEL (61 aa)) is the Tudor domain.

This sequence belongs to the DEAD box helicase family. DEAH subfamily. In terms of assembly, interacts with piRNA-associated proteins PIWIL1 and PIWIL4.

It is found in the cytoplasm. The protein localises to the nucleus. It catalyses the reaction ATP + H2O = ADP + phosphate + H(+). In terms of biological role, ATP-binding RNA helicase required during spermatogenesis. Required to repress transposable elements and prevent their mobilization, which is essential for the germline integrity. Acts via the piRNA metabolic process, which mediates the repression of transposable elements during meiosis by forming complexes composed of piRNAs and Piwi proteins and governs the methylation and subsequent repression of transposons. Acts downstream of piRNA biogenesis: exclusively required for transposon silencing in the nucleus, suggesting that it acts as a nuclear effector in the nucleus together with PIWIL4. This chain is ATP-dependent RNA helicase TDRD9, found in Homo sapiens (Human).